A 224-amino-acid polypeptide reads, in one-letter code: Retinoschisin (224 aa).

The first 23 residues, 1-23 (MSRKIEGFLLLLLFGYEATLGLS), serve as a signal peptide directing secretion. An F5/8 type C domain is found at 63–219 (CPYHKPLGFE…IAIRMELLEC (157 aa)). 2 cysteine pairs are disulfide-bonded: Cys-63–Cys-219 and Cys-110–Cys-142.

Homooctamer of 4 homodimers; disulfide-linked. The homooctamer has a flat, cogwheel structure with a diameter of about 14 nm. Two stacked octamers can assemble to form a hexadecamer. As to expression, restricted to the retina (at protein level). Detected in the inner segment of the photoreceptors, the inner nuclear layer, the inner plexiform layer and the ganglion cell layer (at protein level). At the macula, expressed in both the outer and inner nuclear layers and in the inner plexiform layer (at protein level). Detected in retina. Detected only within the photoreceptor cell layer, most prominently within the inner segments of the photoreceptors. Undetectable in the inner plexiform layers and the inner nuclear layer.

Its subcellular location is the secreted. The protein localises to the cell membrane. In terms of biological role, binds negatively charged membrane lipids, such as phosphatidylserine and phosphoinositides. May play a role in cell-cell adhesion processes in the retina, via homomeric interaction between octamers present on the surface of two neighboring cells. Required for normal structure and function of the retina. The chain is Retinoschisin (RS1) from Homo sapiens (Human).